We begin with the raw amino-acid sequence, 31 residues long: Photosystem II reaction center protein T (31 aa).

Residues 3–23 (SVAYIVVLTMALAVLFFAIAF) form a helical membrane-spanning segment.

The protein belongs to the PsbT family. In terms of assembly, PSII is composed of 1 copy each of membrane proteins PsbA, PsbB, PsbC, PsbD, PsbE, PsbF, PsbH, PsbI, PsbJ, PsbK, PsbL, PsbM, PsbT, PsbX, PsbY, PsbZ, Psb30/Ycf12, peripheral proteins PsbO, CyanoQ (PsbQ), PsbU, PsbV and a large number of cofactors. It forms dimeric complexes.

The protein resides in the cellular thylakoid membrane. Functionally, found at the monomer-monomer interface of the photosystem II (PS II) dimer, plays a role in assembly and dimerization of PSII. PSII is a light-driven water plastoquinone oxidoreductase, using light energy to abstract electrons from H(2)O, generating a proton gradient subsequently used for ATP formation. The polypeptide is Photosystem II reaction center protein T (Crocosphaera subtropica (strain ATCC 51142 / BH68) (Cyanothece sp. (strain ATCC 51142))).